Here is a 410-residue protein sequence, read N- to C-terminus: Regulator of microtubule dynamics protein 2 (410 aa).

The helical transmembrane segment at 9–28 (LILGIMVGTAGISLLLLWYH) threads the bilayer. Serine 51 is modified (phosphoserine). A coiled-coil region spans residues 68 to 110 (FQERQLQILEKLNELLTNMEELKEEIRFLKEAIPKLEEYIQDE). Serine 121 bears the Phosphoserine mark. The span at 122–131 (PQHRARKRRL) shows a compositional bias: basic residues. A disordered region spans residues 122-164 (PQHRARKRRLPTIQSSATSNSSEEAESEGGYITANTDTEEQSF). Threonine 139 bears the Phosphothreonine mark. The residue at position 152 (tyrosine 152) is a Phosphotyrosine. 2 positions are modified to phosphothreonine: threonine 154 and threonine 157.

The protein belongs to the RMDN family. As to quaternary structure, interacts with microtubules.

The protein resides in the membrane. Its subcellular location is the cytoplasm. It localises to the cytoskeleton. It is found in the spindle. The protein localises to the spindle pole. The polypeptide is Regulator of microtubule dynamics protein 2 (RMDN2) (Homo sapiens (Human)).